Here is a 637-residue protein sequence, read N- to C-terminus: MTRTGPPINPISWDTKTIVPDDGSRIDSVACQDARPKGRIRRSMTACHTCRKLKTRCDVDPRGHSCRRCLSLRLDCELPETTERFQDNASTWSDATAVPSIEERLVSLERGMGEMIHLMRQIVKSSPSMPCSPTFQTRNHSIDGTSSSDSMSSSFYPLKPAQLIRDLQAECFGERAHFSDADILGDIVTQGIVDSKLSVKLIELFVEHFGHWVSINHSSSLQRSNTLLFNTACLLASRYMPGLPQHTVRDISLYVQHAVAKVLWKPPPMTSDMLQALTLLCLYSTSIHKEGLMDDWLLSGISINHALISFNFLNTLPGDNLSPDELLAQLRLWNTLCATQLHSALANGRTVNIQQQYINQCPRILEHAGATPEDGRIVAEIQLYRIALRLQHSQSRLQFAESEYEELERWRMEWAHLLTTNGDSTLNLNLWFCQLLLHRTAARLQPDSERLLPEICGTARLIITQFLQTRFTSAPALIDHVYFIVGYAALTLCDYTLTDPLINQVRGFLLHLAPGGDNLSYRIACIVGEVQRRYSEATAVVAAGSHSSSPVAEVKGAQMFGSSHHHRTGMELSQLMSSPEGLDSLVEGYNCLEQMMPGYAASQPAFEAPDLFHHSPTTGVTGGAMPIGLVPRALHDW.

Positions 47–76 form a DNA-binding region, zn(2)-C6 fungal-type; it reads CHTCRKLKTRCDVDPRGHSCRRCLSLRLDC. Over residues 127–145 the composition is skewed to polar residues; it reads PSMPCSPTFQTRNHSIDGT. Residues 127–153 form a disordered region; the sequence is PSMPCSPTFQTRNHSIDGTSSSDSMSS.

Belongs to the prtT family.

It localises to the nucleus. Transcription factor required for protein utilization and degradation. Regulates transcription of major secreted proteases. The sequence is that of Transcriptional activator of proteases prtT (prtT) from Penicillium rubens (strain ATCC 28089 / DSM 1075 / NRRL 1951 / Wisconsin 54-1255) (Penicillium chrysogenum).